We begin with the raw amino-acid sequence, 435 residues long: Glucoside xylosyltransferase 1 (435 aa).

Over 1 to 6 (MRRYLR) the chain is Cytoplasmic. The chain crosses the membrane as a helical; Signal-anchor for type II membrane protein span at residues 7-29 (VVGLCLACGFCSLLYAFSQLAVS). Topologically, residues 30–435 (LEEGAAVGRR…NRYDTPPKER (406 aa)) are lumenal. N-linked (GlcNAc...) asparagine glycosylation is found at asparagine 168 and asparagine 232.

It belongs to the glycosyltransferase 8 family.

It localises to the membrane. The catalysed reaction is 3-O-(beta-D-glucosyl)-L-seryl-[EGF-like domain protein] + UDP-alpha-D-xylose = 3-O-[alpha-D-xylosyl-(1-&gt;3)-beta-D-glucosyl]-L-seryl-[EGF-like domain protein] + UDP + H(+). In terms of biological role, glycosyltransferase which elongates the O-linked glucose attached to EGF-like repeats in the extracellular domain of Notch proteins by catalyzing the addition of xylose. This Rattus norvegicus (Rat) protein is Glucoside xylosyltransferase 1 (Gxylt1).